The chain runs to 653 residues: Ran-binding protein 9 (653 aa).

Over residues 1 to 21 (MSGQPPPPPPQQQPPPPPPPA) the composition is skewed to pro residues. A disordered region spans residues 1–62 (MSGQPPPPPP…SAAAPFPHGD (62 aa)). Positions 22–57 (SAAAPATAPPGLAVGPGPAAGVPVPGLAAGSSAAAP) are enriched in low complexity. A B30.2/SPRY domain is found at 72–259 (LQRRLKRLYP…VDANFGQHPF (188 aa)). The region spanning 290–322 (WQTMIQKMVSSYLVHHGYCATAEAFARSTDQTV) is the LisH domain. An interaction with CALB1 region spans residues 326 to 332 (LASIKNR). A CTLH domain is found at 328-385 (SIKNRQRIQKLVLAGRMGEAIETTQQLYPSLLERNPNLLFTLKVRQFIEMVNGTDSEV). At lysine 330 the chain carries N6-acetyllysine. Residues 386-422 (RCLGGRSPKSQDSYPVSPRPFSSPSMSPSHGMSIHSL) form a disordered region. Residues 398-421 (SYPVSPRPFSSPSMSPSHGMSIHS) are compositionally biased toward low complexity. A phosphoserine mark is found at serine 402 and serine 412. The tract at residues 539–653 (AAIERMIHFG…AFATVEDYLH (115 aa)) is interaction with FMR1.

This sequence belongs to the RANBP9/10 family. As to quaternary structure, part of a complex consisting of RANBP9, MKLN1 and GID8. Identified in the CTLH complex that contains GID4, RANBP9 and/or RANBP10, MKLN1, MAEA, RMND5A (or alternatively its paralog RMND5B), GID8, ARMC8, WDR26 and YPEL5. Within this complex, MAEA, RMND5A (or alternatively its paralog RMND5B), GID8, WDR26, and RANBP9 and/or RANBP10 form the catalytic core, while GID4, MKLN1, ARMC8 and YPEL5 have ancillary roles. Interacts with GTP-bound Ran, AR, CDC2L1/p110C, CALB1, S100A7, USP11, SOS1 or SOS2, GID8, and FMR1. Interacts with the Dyrk kinases HIPK2, DYRK1A, and DYRK1B. Interacts with TP73 isoform Alpha but not with TP53. Interacts with the HGF receptor MET and the integrins ITGB1 and ITGB2, but not with ITGAL. Part of a complex consisting of RANBP9, RAN, DYRK1B and COPS5. Directly interacts with RANBP10. Interacts with YPEL5. Interacts with MKLN1. Interacts with DDX4. Interacts with NGFR. Interacts with Tex19.1 and, probably, Tex19.2. Post-translationally, phosphorylated in response to stress. In terms of processing, ubiquitinated. Polyubiquitination targets the protein for rapid degradation via the ubiquitin system. Ubiquitously expressed, with highest levels in maturating spermatocytes.

Its subcellular location is the cytoplasm. It is found in the cell membrane. It localises to the nucleus. May act as scaffolding protein, and as adapter protein to couple membrane receptors to intracellular signaling pathways. Acts as a mediator of cell spreading and actin cytoskeleton rearrangement. Core component of the CTLH E3 ubiquitin-protein ligase complex that selectively accepts ubiquitin from UBE2H and mediates ubiquitination and subsequent proteasomal degradation of the transcription factor HBP1. May be involved in signaling of ITGB2/LFA-1 and other integrins. Enhances HGF-MET signaling by recruiting Sos and activating the Ras pathway. Enhances dihydrotestosterone-induced transactivation activity of AR, as well as dexamethasone-induced transactivation activity of NR3C1, but not affect estrogen-induced transactivation. Stabilizes TP73 isoform Alpha, probably by inhibiting its ubiquitination, and increases its proapoptotic activity. Inhibits the kinase activity of DYRK1A and DYRK1B. Inhibits FMR1 binding to RNA. This chain is Ran-binding protein 9, found in Mus musculus (Mouse).